We begin with the raw amino-acid sequence, 212 residues long: Fucoxanthin-chlorophyll a-c binding protein E, chloroplastic (212 aa).

The transit peptide at 1–34 directs the protein to the chloroplast; that stretch reads MAIACAAAPGLRGAEPFNGAALATSAKSSSAMKM. A run of 3 helical transmembrane segments spans residues 76–96, 117–137, and 178–198; these read IAMLAVVGHITQQNTRLPGML, IPPLGTLQIILAIGCHELFVV, and GRAAQMGILAMMVHEQLSNQP.

It belongs to the fucoxanthin chlorophyll protein family. As to quaternary structure, the LHC complex of chromophytic algae is composed of fucoxanthin, chlorophyll A and C bound non-covalently by fucoxanthin chlorophyll proteins (FCPs). The ratio of pigments in this LHC is; fucoxanthin: chlorophyll C: chlorophyll A; (0.6-1): (0.1-0.3): (1).

The protein resides in the plastid. It localises to the chloroplast thylakoid membrane. Its function is as follows. The light-harvesting complex (LHC) functions as a light receptor, it captures and delivers excitation energy to photosystems with which it is closely associated. Energy is transferred from the carotenoid and chlorophyll C (or B) to chlorophyll A and the photosynthetic reaction centers where it is used to synthesize ATP and reducing power. This is Fucoxanthin-chlorophyll a-c binding protein E, chloroplastic (FCPE) from Macrocystis pyrifera (Giant kelp).